A 113-amino-acid polypeptide reads, in one-letter code: Large ribosomal subunit protein eL34 (113 aa).

It belongs to the eukaryotic ribosomal protein eL34 family.

This is Large ribosomal subunit protein eL34 from Methanopyrus kandleri (strain AV19 / DSM 6324 / JCM 9639 / NBRC 100938).